Consider the following 256-residue polypeptide: Trypsin, alkaline C (256 aa).

A signal peptide spans 1–17; that stretch reads MRLFLALLALGFAAVAA. A propeptide spans 18 to 24 (activation peptide); that stretch reads VPANPQR. The Peptidase S1 domain occupies 25–256; that stretch reads IVGGSTTTIQ…RYTSWISNNS (232 aa). An intrachain disulfide couples C55 to C71. Active-site charge relay system residues include H70 and D115. 2 disulfides stabilise this stretch: C180-C197 and C209-C233. Residue S213 is the Charge relay system of the active site.

It belongs to the peptidase S1 family. Midgut.

Its subcellular location is the secreted. The protein resides in the extracellular space. It carries out the reaction Preferential cleavage: Arg-|-Xaa, Lys-|-Xaa.. This chain is Trypsin, alkaline C, found in Manduca sexta (Tobacco hawkmoth).